The primary structure comprises 104 residues: Pole-localizer protein TmaR (104 aa).

Coiled coils occupy residues 13-43 (RKNKLKRELLDNEKKVRDNRKRVELLENLLD) and 76-96 (SAEISKARRDISRRIRELTEE).

This sequence belongs to the pole-localizer TmaR family.

It is found in the cytoplasm. Functionally, pole-localizer protein involved in the regulation of several cellular processes. The protein is Pole-localizer protein TmaR of Vibrio vulnificus (strain CMCP6).